We begin with the raw amino-acid sequence, 216 residues long: Adenylate kinase (216 aa).

Position 10 to 15 (G10 to T15) interacts with ATP. Residues S30–V59 form an NMP region. Residues T31, R36, Q57–V59, G85–R88, and Q92 each bind AMP. An LID region spans residues G126–D163. An ATP-binding site is contributed by R127. The Zn(2+) site is built by C130 and C133. S136–Y137 is a binding site for ATP. The Zn(2+) site is built by C150 and C153. Residues R160 and R171 each contribute to the AMP site. An ATP-binding site is contributed by E199.

Belongs to the adenylate kinase family. In terms of assembly, monomer.

The protein localises to the cytoplasm. It carries out the reaction AMP + ATP = 2 ADP. Its pathway is purine metabolism; AMP biosynthesis via salvage pathway; AMP from ADP: step 1/1. Catalyzes the reversible transfer of the terminal phosphate group between ATP and AMP. Plays an important role in cellular energy homeostasis and in adenine nucleotide metabolism. The protein is Adenylate kinase of Clostridium botulinum (strain Loch Maree / Type A3).